A 351-amino-acid polypeptide reads, in one-letter code: Histidine protein kinase SaeS (351 aa).

The next 2 helical transmembrane spans lie at Ile-9–Ile-29 and Thr-40–Ile-60. Positions Asn-61–Asn-114 constitute an HAMP domain. Positions Asn-129–Asp-348 constitute a Histidine kinase domain. His-132 is subject to Phosphohistidine; by autocatalysis.

In terms of processing, autophosphorylated.

It localises to the cell membrane. The enzyme catalyses ATP + protein L-histidine = ADP + protein N-phospho-L-histidine.. Its function is as follows. Member of the two-component regulatory system SaeR/SaeS involved in the regulation of staphylococcal virulence factors in a strain-dependent fashion. Probably functions as a membrane-associated protein kinase that upon sensing the appropriate signal, autophosphorylates and in turn activates the cytosolic response regulator SaeR. This Staphylococcus aureus (strain MRSA252) protein is Histidine protein kinase SaeS (saeS).